A 219-amino-acid chain; its full sequence is Thiamine-phosphate synthase (219 aa).

Residues 48-52 and Asn-80 contribute to the 4-amino-2-methyl-5-(diphosphooxymethyl)pyrimidine site; that span reads QLREK. Residues Asp-81 and Asp-100 each contribute to the Mg(2+) site. Ser-119 provides a ligand contact to 4-amino-2-methyl-5-(diphosphooxymethyl)pyrimidine. Residue 145–147 coordinates 2-[(2R,5Z)-2-carboxy-4-methylthiazol-5(2H)-ylidene]ethyl phosphate; the sequence is TPT. 4-amino-2-methyl-5-(diphosphooxymethyl)pyrimidine is bound at residue Lys-148. 2-[(2R,5Z)-2-carboxy-4-methylthiazol-5(2H)-ylidene]ethyl phosphate contacts are provided by residues Gly-176 and 196–197; that span reads VS.

Belongs to the thiamine-phosphate synthase family. Mg(2+) is required as a cofactor.

It catalyses the reaction 2-[(2R,5Z)-2-carboxy-4-methylthiazol-5(2H)-ylidene]ethyl phosphate + 4-amino-2-methyl-5-(diphosphooxymethyl)pyrimidine + 2 H(+) = thiamine phosphate + CO2 + diphosphate. It carries out the reaction 2-(2-carboxy-4-methylthiazol-5-yl)ethyl phosphate + 4-amino-2-methyl-5-(diphosphooxymethyl)pyrimidine + 2 H(+) = thiamine phosphate + CO2 + diphosphate. The catalysed reaction is 4-methyl-5-(2-phosphooxyethyl)-thiazole + 4-amino-2-methyl-5-(diphosphooxymethyl)pyrimidine + H(+) = thiamine phosphate + diphosphate. Its pathway is cofactor biosynthesis; thiamine diphosphate biosynthesis; thiamine phosphate from 4-amino-2-methyl-5-diphosphomethylpyrimidine and 4-methyl-5-(2-phosphoethyl)-thiazole: step 1/1. In terms of biological role, condenses 4-methyl-5-(beta-hydroxyethyl)thiazole monophosphate (THZ-P) and 2-methyl-4-amino-5-hydroxymethyl pyrimidine pyrophosphate (HMP-PP) to form thiamine monophosphate (TMP). The sequence is that of Thiamine-phosphate synthase from Albidiferax ferrireducens (strain ATCC BAA-621 / DSM 15236 / T118) (Rhodoferax ferrireducens).